Here is a 63-residue protein sequence, read N- to C-terminus: Large ribosomal subunit protein uL29 (63 aa).

Belongs to the universal ribosomal protein uL29 family.

The sequence is that of Large ribosomal subunit protein uL29 from Shewanella halifaxensis (strain HAW-EB4).